The primary structure comprises 553 residues: Keratin, type II cytoskeletal 73 (553 aa).

Residues 1 to 130 are head; sequence MNRQFTCKSG…DPEIQKVRAQ (130 aa). A coil 1A region spans residues 131–166; sequence EREQIKALNNKFASFIDKVRFLEQQNQVLQTKWELL. The IF rod domain maps to 131–444; it reads EREQIKALNN…KLLEGEECRM (314 aa). A linker 1 region spans residues 167 to 185; the sequence is QQLDLSNCRRNLEPVYEAH. The interval 186–277 is coil 1B; it reads ISSLQKQLDS…CLYEGEITQM (92 aa). Residues 278-301 are linker 12; sequence QSHISDTSVVLSMDNNRNLDLDSI. The segment at 302–440 is coil 2; it reads IAEVRAQYED…ATYRKLLEGE (139 aa). A tail region spans residues 441–539; that stretch reads ECRMSGEHTN…LGSPSKKTMR (99 aa).

Belongs to the intermediate filament family. Heterotetramer of two type I and two type II keratins.

Has a role in hair formation. Specific component of keratin intermediate filaments in the inner root sheath (IRS) of the hair follicle. The protein is Keratin, type II cytoskeletal 73 (Krt73) of Rattus norvegicus (Rat).